Consider the following 442-residue polypeptide: Transcriptional coactivator YAP1 (442 aa).

A phosphoserine; by LATS1 and LATS2 mark is found at S21, S69, and S87. Disordered stretches follow at residues L51–P89 and V97–R116. S119 is subject to Phosphoserine; by LATS1 and LATS2. WW domains lie at M126–K159 and G186–L219. The segment at I230–N254 is disordered. The span at Q238 to G249 shows a compositional bias: low complexity. The interval Q247–L442 is transactivation domain. Positions R258–R279 form a coiled coil. Residues R286–T374 form a disordered region. 3 stretches are compositionally biased toward polar residues: residues Q288 to S304, R313 to Y329, and D337 to V347.

The protein belongs to the YAP1 family. Post-translationally, phosphorylated by lats1 and lats2; leading to cytoplasmic translocation and inactivation. As to expression, expressed in the notochord, brain, eyes, branchial arches and pectoral fins.

It is found in the cytoplasm. It localises to the nucleus. Its subcellular location is the cell junction. The protein localises to the tight junction. The protein resides in the cell membrane. Its function is as follows. Transcriptional regulator which can act both as a coactivator and a corepressor and is the critical downstream regulatory target in the Hippo signaling pathway that plays a pivotal role in organ size control and tumor suppression by restricting proliferation and promoting apoptosis. Required for expansion of the neural plate and neural plate border zone progenitor pools. Acts as a direct regulator of pax3 expression via interaction with tead1. Plays a key role in tissue tension and 3D tissue shape by regulating cortical actomyosin network formation. The chain is Transcriptional coactivator YAP1 (yap1) from Danio rerio (Zebrafish).